A 251-amino-acid chain; its full sequence is Ribosomal RNA small subunit methyltransferase J (251 aa).

S-adenosyl-L-methionine is bound by residues 100 to 101, 116 to 117, and Asp-170; these read RD and ER.

It belongs to the methyltransferase superfamily. RsmJ family.

It localises to the cytoplasm. It carries out the reaction guanosine(1516) in 16S rRNA + S-adenosyl-L-methionine = N(2)-methylguanosine(1516) in 16S rRNA + S-adenosyl-L-homocysteine + H(+). Functionally, specifically methylates the guanosine in position 1516 of 16S rRNA. This is Ribosomal RNA small subunit methyltransferase J from Haemophilus ducreyi (strain 35000HP / ATCC 700724).